The sequence spans 263 residues: 4-hydroxy-2-oxo-heptane-1,7-dioate aldolase (263 aa).

Residue H45 is the Proton acceptor of the active site. Q147 contacts substrate. E149 is a binding site for a divalent metal cation. 2 residues coordinate substrate: A174 and D175. An a divalent metal cation-binding site is contributed by D175.

Belongs to the HpcH/HpaI aldolase family. In terms of assembly, homohexamer; trimer of dimers. The cofactor is a divalent metal cation.

The enzyme catalyses 4-hydroxy-2-oxoheptanedioate = succinate semialdehyde + pyruvate. The protein operates within aromatic compound metabolism; 4-hydroxyphenylacetate degradation; pyruvate and succinate semialdehyde from 4-hydroxyphenylacetate: step 7/7. Functionally, catalyzes the reversible retro-aldol cleavage of 4-hydroxy-2-ketoheptane-1,7-dioate (HKHD) to pyruvate and succinic semialdehyde. This is 4-hydroxy-2-oxo-heptane-1,7-dioate aldolase from Salmonella paratyphi A (strain ATCC 9150 / SARB42).